We begin with the raw amino-acid sequence, 320 residues long: MTVPFGFVVIDKPAGITSHDCVSRMRRVFGIKRVGHGGTLDPAVTGVLPIALGHATRLLPYLPGAKSYRGSIQLGQRTSSDDQQGDLISKQAWPELNTAEIEAYLEPFRGRIQQRPPQVSAVHVQGERAHARARRGETMEIPARTITIDRLQLLNWNQQLGQIDFNVHCSSGTYIRSLARDLGELIGCGACLGWLKRTQALGFHEQQAVPLPDRDNPALTTPPAVLPPLTALAHLPRLQLNEEEQESWSCGRRITAHQDQCQPAPKPLASDQQESAPNQTDPSANKSMLVVIDCRGEVAGMAYWEDNATVKPKVVFNAQG.

The active-site Nucleophile is Asp-41. Disordered regions lie at residues 116–136 and 259–284; these read PPQV…ARRG and DQCQ…DPSA. A compositionally biased stretch (basic and acidic residues) spans 125–136; sequence QGERAHARARRG. Polar residues predominate over residues 270 to 284; the sequence is SDQQESAPNQTDPSA.

Belongs to the pseudouridine synthase TruB family. Type 1 subfamily.

The enzyme catalyses uridine(55) in tRNA = pseudouridine(55) in tRNA. Responsible for synthesis of pseudouridine from uracil-55 in the psi GC loop of transfer RNAs. The protein is tRNA pseudouridine synthase B of Prochlorococcus marinus (strain MIT 9313).